The sequence spans 537 residues: Leucine-rich repeat LGI family member 4 (537 aa).

An N-terminal signal peptide occupies residues 1-19 (MGGAGILLLLLAGAGVVVA). LRR repeat units follow at residues 53–74 (TLLS…SFLR), 77–98 (SLHL…AFAG), 101–122 (HLQY…ALRG), and 125–146 (SLTH…LFRG). The LRRCT domain occupies 158 to 208 (NPFQCDCRVLWLLQWMPTVNASVGTGACAGPASLSHMQLHHLDPKTFKCRA). A glycan (N-linked (GlcNAc...) asparagine) is linked at N177. EAR repeat units lie at residues 210-252 (ELSW…SWDY), 256-298 (RFRP…ARPS), 302-349 (RLAP…CRDG), 351-394 (GFYP…HWTG), 396-439 (RFER…RWDG), 441-483 (MFRL…RLEP), and 487-532 (LLEP…QHHE).

Can bind to ADAM11, ADAM22 and ADAM23. Widely expressed, with highest expression in brain.

It localises to the secreted. Its function is as follows. Component of Schwann cell signaling pathway(s) that controls axon segregation and myelin formation. This is Leucine-rich repeat LGI family member 4 (LGI4) from Homo sapiens (Human).